Here is a 562-residue protein sequence, read N- to C-terminus: Aureusidin synthase (562 aa).

2 disulfides stabilise this stretch: Cys-71–Cys-86 and Cys-85–Cys-148. Cu cation-binding residues include His-147, His-168, His-177, His-301, His-305, and His-335. The 2'-(S-cysteinyl)-histidine (Cys-His) cross-link spans 151–168 (CAGAYNQAGFTNLKLQIH).

Belongs to the tyrosinase family. As to quaternary structure, monomer. Cu(2+) serves as cofactor. Glycosylated. Post-translationally, contains probably N- and C-terminal propeptides. Expressed in petals. Not detected in stems and leaves.

The protein localises to the vacuole lumen. The catalysed reaction is 2',4,4',6'-tetrahydroxychalcone 4'-O-beta-D-glucoside + O2 = aureusidin 6-O-beta-glucoside + H2O. It carries out the reaction 2 2',3,4,4',6'-pentahydroxychalcone 4'-O-beta-D-glucoside + O2 + 2 H(+) = 2 aureusidin 6-O-beta-glucoside + 2 H2O. It catalyses the reaction 2',3,4,4',6'-pentahydroxychalcone 4'-O-beta-D-glucoside + O2 + H(+) = bracteatin 6-O-beta-glucoside + H2O. With respect to regulation, h(2)O(2) activates the 3-hydroxylation and oxidative cyclization of tetrahydroxychalcone but inhibits reaction with pentahydroxychalcone. Inhibited by phenylthiourea. Functionally, involved in the biosynthesis of aurones, plant flavonoids that provide yellow coloration to flowers. Can use tetrahydroxychalcone (THC), pentahydroxychalcone (PHC), THC 4'-glucoside and PHC 4'-glucoside as substrates, but not 2'-hydroxychalcone, 4-hydroxychalcone, PHC 3-glucoside, 2',6'-dihydroxy-4,4'-dimethoxychalcone, naringenin, eriodictyol and 4,4',6-trihydroxyaurone. Can also produce bracteatin from PHC. The protein is Aureusidin synthase (AS1) of Antirrhinum majus (Garden snapdragon).